Reading from the N-terminus, the 425-residue chain is Glutamyl-tRNA reductase (425 aa).

Residues 49–52, Ser107, 112–114, and Gln118 contribute to the substrate site; these read TCNR and EPQ. The active-site Nucleophile is Cys50. NADP(+) is bound at residue 187 to 192; it reads GAGETI.

It belongs to the glutamyl-tRNA reductase family. As to quaternary structure, homodimer.

The enzyme catalyses (S)-4-amino-5-oxopentanoate + tRNA(Glu) + NADP(+) = L-glutamyl-tRNA(Glu) + NADPH + H(+). It participates in porphyrin-containing compound metabolism; protoporphyrin-IX biosynthesis; 5-aminolevulinate from L-glutamyl-tRNA(Glu): step 1/2. Its function is as follows. Catalyzes the NADPH-dependent reduction of glutamyl-tRNA(Glu) to glutamate 1-semialdehyde (GSA). The polypeptide is Glutamyl-tRNA reductase (Pseudomonas savastanoi pv. phaseolicola (strain 1448A / Race 6) (Pseudomonas syringae pv. phaseolicola (strain 1448A / Race 6))).